The sequence spans 441 residues: Ribosomal protein uS12 methylthiotransferase RimO (441 aa).

Residues 8 to 118 enclose the MTTase N-terminal domain; that stretch reads PKIGFVSLGC…VLQHVHHYVP (111 aa). [4Fe-4S] cluster-binding residues include C17, C53, C82, C150, C154, and C157. Residues 136–373 enclose the Radical SAM core domain; that stretch reads LTPRHYAYLK…MQLQQQISAE (238 aa). The TRAM domain maps to 376–441; the sequence is QEKVGREILV…DEYDLWGSRV (66 aa).

It belongs to the methylthiotransferase family. RimO subfamily. Requires [4Fe-4S] cluster as cofactor.

The protein localises to the cytoplasm. The catalysed reaction is L-aspartate(89)-[ribosomal protein uS12]-hydrogen + (sulfur carrier)-SH + AH2 + 2 S-adenosyl-L-methionine = 3-methylsulfanyl-L-aspartate(89)-[ribosomal protein uS12]-hydrogen + (sulfur carrier)-H + 5'-deoxyadenosine + L-methionine + A + S-adenosyl-L-homocysteine + 2 H(+). Functionally, catalyzes the methylthiolation of an aspartic acid residue of ribosomal protein uS12. The polypeptide is Ribosomal protein uS12 methylthiotransferase RimO (Salmonella typhi).